We begin with the raw amino-acid sequence, 714 residues long: Developmentally-regulated protein kinase 1 (714 aa).

Disordered regions lie at residues 88–122 (NNNISNNNNNNNNNNNNNNNNNNNNNNINNNNNFN) and 174–266 (CNMI…IINN). Low complexity-rich tracts occupy residues 174 to 200 (CNMINNDNNNNNNNNNNNNNNNNNNNN), 209 to 227 (PSSNSTPSHSSPSSPTTSS), and 240 to 266 (NFNQQLQNNNNSNNNSNNNNNNNIINN). The 256-residue stretch at 334–589 (FNFYGSLGSG…SCSIRNHKWF (256 aa)) folds into the Protein kinase domain. Residues 340 to 348 (LGSGSFGTA) and Lys-363 contribute to the ATP site. Asp-457 functions as the Proton acceptor in the catalytic mechanism. Thr-488 bears the Phosphothreonine mark.

This sequence belongs to the protein kinase superfamily. AGC Ser/Thr protein kinase family.

It carries out the reaction L-seryl-[protein] + ATP = O-phospho-L-seryl-[protein] + ADP + H(+). The catalysed reaction is L-threonyl-[protein] + ATP = O-phospho-L-threonyl-[protein] + ADP + H(+). This is Developmentally-regulated protein kinase 1 (pkaD) from Dictyostelium discoideum (Social amoeba).